A 559-amino-acid polypeptide reads, in one-letter code: Inositol-3-phosphate synthase 1 (559 aa).

G67, G68, N69, N70, D141, S177, V178, Q188, R191, T228, A229, N230, T231, G278, S279, D303, S306, N337, N338, D339, and K352 together coordinate NAD(+). A Phosphoserine modification is found at S279. Residue S357 is modified to Phosphoserine. Residues G390, D391, D419, and S420 each coordinate NAD(+).

The protein belongs to the myo-inositol 1-phosphate synthase family. Requires NAD(+) as cofactor.

The protein resides in the cytoplasm. It carries out the reaction D-glucose 6-phosphate = 1D-myo-inositol 3-phosphate. It functions in the pathway polyol metabolism; myo-inositol biosynthesis; myo-inositol from D-glucose 6-phosphate: step 1/2. Functionally, key enzyme in myo-inositol biosynthesis pathway that catalyzes the conversion of glucose 6-phosphate to 1-myo-inositol 1-phosphate in a NAD-dependent manner. Rate-limiting enzyme in the synthesis of all inositol-containing compounds. The sequence is that of Inositol-3-phosphate synthase 1 (ISYNA1) from Macaca fascicularis (Crab-eating macaque).